The following is a 63-amino-acid chain: ATPase inhibitor, mitochondrial (63 aa).

A disordered region spans residues 1–23 (TAGATGATRQDGSTDAFEKREKA). Residues 18–62 (EKREKAQEDLYIRQHEKEQLEALKESLKKQKKSLDDLEBKIDDLT) are a coiled coil.

This sequence belongs to the ATPase inhibitor family.

Its subcellular location is the mitochondrion. Functionally, this protein forms a one-to-one complex with ATPase to inhibit the enzyme activity completely. This chain is ATPase inhibitor, mitochondrial, found in Cyberlindnera jadinii (Torula yeast).